A 275-amino-acid chain; its full sequence is 4-diphosphocytidyl-2-C-methyl-D-erythritol kinase (275 aa).

The active site involves K14. Position 98–108 (98–108) interacts with ATP; that stretch reads PMGAGLGGGSS. D140 is a catalytic residue.

The protein belongs to the GHMP kinase family. IspE subfamily.

It catalyses the reaction 4-CDP-2-C-methyl-D-erythritol + ATP = 4-CDP-2-C-methyl-D-erythritol 2-phosphate + ADP + H(+). It participates in isoprenoid biosynthesis; isopentenyl diphosphate biosynthesis via DXP pathway; isopentenyl diphosphate from 1-deoxy-D-xylulose 5-phosphate: step 3/6. Catalyzes the phosphorylation of the position 2 hydroxy group of 4-diphosphocytidyl-2C-methyl-D-erythritol. The chain is 4-diphosphocytidyl-2-C-methyl-D-erythritol kinase from Francisella tularensis subsp. novicida (strain U112).